Consider the following 139-residue polypeptide: NADH-quinone oxidoreductase subunit A (139 aa).

The next 3 membrane-spanning stretches (helical) occupy residues 16–36 (GLFI…ASLL), 69–89 (LVAM…AWAV), and 94–114 (VGWE…AGLV).

Belongs to the complex I subunit 3 family. NDH-1 is composed of 14 different subunits. Subunits NuoA, H, J, K, L, M, N constitute the membrane sector of the complex.

It localises to the cell inner membrane. It catalyses the reaction a quinone + NADH + 5 H(+)(in) = a quinol + NAD(+) + 4 H(+)(out). In terms of biological role, NDH-1 shuttles electrons from NADH, via FMN and iron-sulfur (Fe-S) centers, to quinones in the respiratory chain. The immediate electron acceptor for the enzyme in this species is believed to be ubiquinone. Couples the redox reaction to proton translocation (for every two electrons transferred, four hydrogen ions are translocated across the cytoplasmic membrane), and thus conserves the redox energy in a proton gradient. This Chromohalobacter salexigens (strain ATCC BAA-138 / DSM 3043 / CIP 106854 / NCIMB 13768 / 1H11) protein is NADH-quinone oxidoreductase subunit A.